Reading from the N-terminus, the 412-residue chain is Probable serine/threonine-protein kinase PBL4 (412 aa).

G2 is lipidated: N-myristoyl glycine. C4 carries S-palmitoyl cysteine lipidation. Positions 14–40 (RESPYRGSSRISAKRSQSSRLSSLTIQ) are disordered. The segment covering 21 to 40 (SSRISAKRSQSSRLSSLTIQ) has biased composition (low complexity). Phosphothreonine is present on T72. Residues 83-369 (FRPDSVIGEG…STLEELEMTL (287 aa)) form the Protein kinase domain. Residues 89–97 (IGEGGFGYV) and K121 contribute to the ATP site. The residue at position 167 (Y167) is a Phosphotyrosine. Residue D215 is the Proton acceptor of the active site. Phosphoserine is present on residues S219 and S249. T250 and T255 each carry phosphothreonine. Phosphotyrosine is present on Y263.

The protein belongs to the protein kinase superfamily. Ser/Thr protein kinase family.

The protein resides in the cell membrane. The enzyme catalyses L-seryl-[protein] + ATP = O-phospho-L-seryl-[protein] + ADP + H(+). It carries out the reaction L-threonyl-[protein] + ATP = O-phospho-L-threonyl-[protein] + ADP + H(+). In terms of biological role, may be involved in plant defense signaling. This chain is Probable serine/threonine-protein kinase PBL4, found in Arabidopsis thaliana (Mouse-ear cress).